The following is a 336-amino-acid chain: Type II methyltransferase M2.HphI (336 aa).

This sequence belongs to the N(4)/N(6)-methyltransferase family.

It carries out the reaction a 2'-deoxyadenosine in DNA + S-adenosyl-L-methionine = an N(6)-methyl-2'-deoxyadenosine in DNA + S-adenosyl-L-homocysteine + H(+). An alpha subtype methylase that recognizes the double-stranded sequence 5'-GGTGA-3', probably methylates A-5 on the top strand, and protects the DNA from cleavage by the HphI endonuclease. In Haemophilus parahaemolyticus, this protein is Type II methyltransferase M2.HphI (hphIBM).